The chain runs to 168 residues: 2-C-methyl-D-erythritol 2,4-cyclodiphosphate synthase (168 aa).

The a divalent metal cation site is built by aspartate 11 and histidine 13. 4-CDP-2-C-methyl-D-erythritol 2-phosphate is bound by residues 11 to 13 (DVH) and 41 to 42 (HS). Residue histidine 49 participates in a divalent metal cation binding. 4-CDP-2-C-methyl-D-erythritol 2-phosphate-binding positions include 63 to 65 (DIG), 68 to 72 (FPDTD), 139 to 142 (TTTE), phenylalanine 146, and arginine 149.

The protein belongs to the IspF family. As to quaternary structure, homotrimer. A divalent metal cation serves as cofactor.

The catalysed reaction is 4-CDP-2-C-methyl-D-erythritol 2-phosphate = 2-C-methyl-D-erythritol 2,4-cyclic diphosphate + CMP. It participates in isoprenoid biosynthesis; isopentenyl diphosphate biosynthesis via DXP pathway; isopentenyl diphosphate from 1-deoxy-D-xylulose 5-phosphate: step 4/6. In terms of biological role, involved in the biosynthesis of isopentenyl diphosphate (IPP) and dimethylallyl diphosphate (DMAPP), two major building blocks of isoprenoid compounds. Catalyzes the conversion of 4-diphosphocytidyl-2-C-methyl-D-erythritol 2-phosphate (CDP-ME2P) to 2-C-methyl-D-erythritol 2,4-cyclodiphosphate (ME-CPP) with a corresponding release of cytidine 5-monophosphate (CMP). The protein is 2-C-methyl-D-erythritol 2,4-cyclodiphosphate synthase of Psychrobacter cryohalolentis (strain ATCC BAA-1226 / DSM 17306 / VKM B-2378 / K5).